A 432-amino-acid chain; its full sequence is Glial fibrillary acidic protein (432 aa).

The segment at 1 to 72 (MERRRITSAA…KETRASERAE (72 aa)) is head. Thr7 bears the Phosphothreonine; by AURKB and ROCK1 mark. An Omega-N-methylarginine modification is found at Arg12. Ser13 carries the post-translational modification Phosphoserine; by AURKB and ROCK1. Citrulline is present on residues Arg30 and Arg36. Position 38 is a phosphoserine; by AURKB and ROCK1 (Ser38). The region spanning 69-377 (ERAEMMELND…KLLEGEENRI (309 aa)) is the IF rod domain. Positions 73–104 (MMELNDRFASYIEKVRFLEQQNKALAAELNQL) are coil 1A. Ser82 bears the Phosphoserine mark. Positions 105–115 (RAKEPTKLADV) are linker 1. 2 positions are modified to phosphothreonine: Thr110 and Thr150. Residues 116 to 214 (YQAELRELRL…EEEVRELQEQ (99 aa)) are coil 1B. A linker 12 region spans residues 215–230 (LARQQVHVELDMAKPD). The segment at 231-252 (LTAALKEIRTQYEAMASSNMHE) is coil 2A. The linker 2 stretch occupies residues 253-256 (AEEW). A coil 2B region spans residues 257–377 (YRSKFADLTD…KLLEGEENRI (121 aa)). Residue Arg270 is modified to Citrulline. Ser323 carries the phosphoserine modification. The segment at 378–432 (TIPVQTFSNLQIRETSLDTKSVSEGHLKRNIVVKTVEMRDGEVIKESKQEHKDVM) is tail. Thr383 carries the post-translational modification Phosphothreonine. At Ser385 the chain carries Phosphoserine. 2 positions are modified to citrulline: Arg406 and Arg416.

The protein belongs to the intermediate filament family. In terms of assembly, interacts with SYNM. Phosphorylated by PKN1.

It localises to the cytoplasm. Functionally, GFAP, a class-III intermediate filament, is a cell-specific marker that, during the development of the central nervous system, distinguishes astrocytes from other glial cells. The polypeptide is Glial fibrillary acidic protein (GFAP) (Pongo abelii (Sumatran orangutan)).